Consider the following 6061-residue polypeptide: Intermembrane lipid transfer protein vps13B (6061 aa).

Residues 2-115 enclose the Chorein N-terminal domain; the sequence is FESLVADIIA…QLELKRKKLE (114 aa). Disordered stretches follow at residues 590-623, 803-828, 1386-1414, 1604-1644, 2747-2784, 2950-2972, 3364-3401, 3855-3876, 4011-4068, 4107-4132, 4262-4297, 4321-4442, 4601-4631, 4753-4797, 4861-4882, 5003-5030, and 5372-5429; these read PKYK…NNNK, DIKN…NNKN, QQQQ…NVSS, SSNN…GTLS, QTNQ…EDQE, GLNN…NSST, LNRN…DDDD, QQQQ…RNKK, QQQQ…FKNN, ELEK…RPDE, NSSN…YNGR, SQSI…TSPG, TSSP…KKSL, NNNN…TQEF, NAGG…SISQ, LATK…DGIE, and NINN…IGQD. The segment covering 595–614 has biased composition (basic and acidic residues); the sequence is HQENKENKENQENQENENKN. The span at 1395–1406 shows a compositional bias: basic and acidic residues; that stretch reads QQQKEEEQHGGE. A compositionally biased stretch (polar residues) spans 2747–2756; it reads QTNQNNQKNR. The span at 2774 to 2784 shows a compositional bias: acidic residues; the sequence is NDNDEYDEDQE. Acidic residues predominate over residues 3388–3401; sequence IDDDDGDGDDDDDD. The span at 4015–4024 shows a compositional bias: basic and acidic residues; that stretch reads QEKEKEIEKE. Positions 4031-4040 are enriched in low complexity; sequence LKNNNNISIN. Acidic residues predominate over residues 4041–4057; the sequence is DNDDDDDDDDNDNDENN. Positions 4058 to 4068 are enriched in low complexity; that stretch reads NENYEFNFKNN. Basic and acidic residues predominate over residues 4107 to 4120; sequence ELEKKKRERKENSK. Low complexity-rich tracts occupy residues 4330 to 4383 and 4399 to 4429; these read TTTT…VGSN and NNNN…NNNN. Polar residues predominate over residues 4430-4441; sequence SNDNQVNFSTSP. 2 stretches are compositionally biased toward low complexity: residues 4601–4617 and 4753–4784; these read TSSP…NYNN and NNNN…SNEN. Over residues 4785 to 4794 the composition is skewed to polar residues; the sequence is SQDQPPSIKT. Composition is skewed to low complexity over residues 5013–5030 and 5372–5384; these read DNSN…DGIE and NINN…NNDN. A compositionally biased stretch (basic and acidic residues) spans 5385–5409; that stretch reads NKNKNNNDKNKNNDKNNKNNNDKNN. The span at 5410 to 5421 shows a compositional bias: low complexity; it reads NDNNNNNNNNNN.

The protein belongs to the VPS13 family.

It localises to the membrane. Its function is as follows. Mediates the transfer of lipids between membranes at organelle contact sites. This Dictyostelium discoideum (Social amoeba) protein is Intermembrane lipid transfer protein vps13B (vps13B).